We begin with the raw amino-acid sequence, 283 residues long: Demethylrebeccamycin-D-glucose O-methyltransferase (283 aa).

S-adenosyl-L-methionine contacts are provided by residues S101, Q106, 129 to 130 (DA), L146, and H151.

This sequence belongs to the methyltransferase superfamily. Monomer.

It catalyses the reaction 4'-demethylrebeccamycin + S-adenosyl-L-methionine = rebeccamycin + S-adenosyl-L-homocysteine + H(+). In terms of biological role, glycosyl O-methyltransferase that catalyzes the final step in the biosynthesis of rebeccamycin, an indolocarbazole alkaloid that inhibits topoisomerase 1. Has broad substrate specificity and functions as glycosyl O-methyltransferase on a number of rebeccamycin analogs. The polypeptide is Demethylrebeccamycin-D-glucose O-methyltransferase (rebM) (Lentzea aerocolonigenes (Lechevalieria aerocolonigenes)).